Consider the following 1384-residue polypeptide: DNA-directed RNA polymerase subunit beta (1384 aa).

The protein belongs to the RNA polymerase beta chain family. In terms of assembly, the RNAP catalytic core consists of 2 alpha, 1 beta, 1 beta' and 1 omega subunit. When a sigma factor is associated with the core the holoenzyme is formed, which can initiate transcription.

It catalyses the reaction RNA(n) + a ribonucleoside 5'-triphosphate = RNA(n+1) + diphosphate. Its function is as follows. DNA-dependent RNA polymerase catalyzes the transcription of DNA into RNA using the four ribonucleoside triphosphates as substrates. The chain is DNA-directed RNA polymerase subunit beta from Stenotrophomonas maltophilia (strain R551-3).